Reading from the N-terminus, the 442-residue chain is Probable D-serine dehydratase (442 aa).

Lysine 115 carries the N6-(pyridoxal phosphate)lysine modification.

The protein belongs to the serine/threonine dehydratase family. DsdA subfamily. Pyridoxal 5'-phosphate is required as a cofactor.

The catalysed reaction is D-serine = pyruvate + NH4(+). The sequence is that of Probable D-serine dehydratase from Halalkalibacterium halodurans (strain ATCC BAA-125 / DSM 18197 / FERM 7344 / JCM 9153 / C-125) (Bacillus halodurans).